A 511-amino-acid polypeptide reads, in one-letter code: MAKKPVMLAILDGLGLSDHKDGNAFSLAKKPNLDKIFKEYPHTVLGASGLSVGLPDGQMGNSEVGHLNIGAGRIVYQALTRITKSIEDGDIFKNEALLKAIDNAKNNDSAIHFMGLLSDGGVHSHIDHLKGLIDFAAKSGVKKVYVHAFLDGRDTAPKSALTYIEDLEKHMAEVGVGSIATVSGRYYAMDRDKRWERIELAYNAMVLGKGEVATSPKEAVERSYHDNKTDEFVLPTVIEKDGKPVATIKSNDSVVFFNFRPDRARQITRAINDKEFDGFKRETLNLVFVTMTEYDSTIEGVEVAFKPESYVNTLGEYVSKQGKKQLRIAETEKYAHVTFFFNGGVEEPNQNEDRALIPSPKVATYDLKPEMSAYEVTDEVLKRIDSDEYDMIILNYANPDMVGHTGVIDAAVKAVETVDECLGKVMDKILEKNGALFITADHGNCEQMIDYSTGNPMTAHTTNLVPFAYIANDAKEKELREEGILADIAPTMLQSMGLEVPKEMTGKSLFK.

Mn(2+) is bound by residues Asp-12 and Ser-62. Ser-62 functions as the Phosphoserine intermediate in the catalytic mechanism. Substrate-binding positions include His-123, Arg-153–Asp-154, Arg-185, Arg-191, Arg-260–Arg-263, and Lys-333. Residues Asp-400, His-404, Asp-441, His-442, and His-460 each coordinate Mn(2+).

This sequence belongs to the BPG-independent phosphoglycerate mutase family. Monomer. Mn(2+) is required as a cofactor.

The enzyme catalyses (2R)-2-phosphoglycerate = (2R)-3-phosphoglycerate. Its pathway is carbohydrate degradation; glycolysis; pyruvate from D-glyceraldehyde 3-phosphate: step 3/5. Catalyzes the interconversion of 2-phosphoglycerate and 3-phosphoglycerate. This is 2,3-bisphosphoglycerate-independent phosphoglycerate mutase from Clostridium novyi (strain NT).